The primary structure comprises 88 residues: Small ribosomal subunit protein bS20 (88 aa).

The disordered stretch occupies residues 1-27 (MANTKQAQKRARQAEQRRQHNASQRSM).

This sequence belongs to the bacterial ribosomal protein bS20 family.

In terms of biological role, binds directly to 16S ribosomal RNA. In Chromohalobacter salexigens (strain ATCC BAA-138 / DSM 3043 / CIP 106854 / NCIMB 13768 / 1H11), this protein is Small ribosomal subunit protein bS20.